A 124-amino-acid polypeptide reads, in one-letter code: uncharacterized protein (124 aa).

Its subcellular location is the cytoplasm. The protein localises to the nucleus. This is an uncharacterized protein from Schizosaccharomyces pombe (strain 972 / ATCC 24843) (Fission yeast).